The following is a 292-amino-acid chain: Bifunctional protein FolD (292 aa).

NADP(+) contacts are provided by residues 169–171 (GRG), threonine 196, and valine 237.

The protein belongs to the tetrahydrofolate dehydrogenase/cyclohydrolase family. In terms of assembly, homodimer.

The catalysed reaction is (6R)-5,10-methylene-5,6,7,8-tetrahydrofolate + NADP(+) = (6R)-5,10-methenyltetrahydrofolate + NADPH. It catalyses the reaction (6R)-5,10-methenyltetrahydrofolate + H2O = (6R)-10-formyltetrahydrofolate + H(+). It participates in one-carbon metabolism; tetrahydrofolate interconversion. Catalyzes the oxidation of 5,10-methylenetetrahydrofolate to 5,10-methenyltetrahydrofolate and then the hydrolysis of 5,10-methenyltetrahydrofolate to 10-formyltetrahydrofolate. This is Bifunctional protein FolD from Bifidobacterium longum (strain NCC 2705).